A 694-amino-acid chain; its full sequence is Transcription activator of gluconeogenesis PTRG_06536 (694 aa).

Residues 1-57 (MTTPDAEDASPSPEYRSDQDDDMAAEQTTDRQSGDASPTQKPANGKPNAKDPLRPRR) form a disordered region. The zn(2)-C6 fungal-type DNA-binding region spans 64–92 (CFACQRAHLTCGDERPCGRCIKRGLQDHC). 4 disordered regions span residues 175–216 (FSNQ…FGPL), 289–369 (AMAF…GDNP), 384–420 (AQRS…RDTK), and 539–569 (VNLG…SEGA). Residues 193–204 (SVQNAGAPSTMS) are compositionally biased toward polar residues. Low complexity predominate over residues 205-214 (QGQQGMQQFG). Residues 302-324 (WQETQSRQGSMHVHTPNNTSGSG) are compositionally biased toward polar residues. Residues 349–363 (ATHSTASPASTDAST) are compositionally biased toward low complexity. The segment covering 392–408 (RPQQENRPPTTALQSIH) has biased composition (polar residues). The PAS domain maps to 485 to 559 (LQRHLMTLQE…SDTSTQNTTP (75 aa)).

It belongs to the ERT1/acuK family.

The protein localises to the nucleus. In terms of biological role, transcription factor which regulates nonfermentable carbon utilization. Activator of gluconeogenetic genes. The protein is Transcription activator of gluconeogenesis PTRG_06536 of Pyrenophora tritici-repentis (strain Pt-1C-BFP) (Wheat tan spot fungus).